A 34-amino-acid chain; its full sequence is SCADAYKSCDSLKCCNNRTCMCSMIGTNCTCRKK.

Disulfide bonds link C2–C15, C9–C20, C14–C31, and C22–C29.

As to expression, expressed by the venom gland.

The protein localises to the secreted. In terms of biological role, non-toxic to mice and insects. The chain is U10-ctenitoxin-Pr1a from Phoneutria reidyi (Brazilian Amazonian armed spider).